The chain runs to 278 residues: Small ribosomal subunit protein uS3 (278 aa).

The KH type-2 domain occupies 39–107 (LRKAISKKYV…KVQLNIVEIS (69 aa)). A disordered region spans residues 255-278 (AEIPAEEKPKRVVKKAENITKEEE).

It belongs to the universal ribosomal protein uS3 family. As to quaternary structure, part of the 30S ribosomal subunit. Forms a tight complex with proteins S10 and S14.

Its function is as follows. Binds the lower part of the 30S subunit head. Binds mRNA in the 70S ribosome, positioning it for translation. This is Small ribosomal subunit protein uS3 from Dehalococcoides mccartyi (strain ATCC BAA-2100 / JCM 16839 / KCTC 5957 / BAV1).